The primary structure comprises 224 residues: Cerebellin-2 (224 aa).

Residues 1-51 (MPAPGQGPRGPLLSMPGRRGALREPADFGSSLGAVLALLLLLLPACCPVRA) form the signal peptide. 2 N-linked (GlcNAc...) asparagine glycosylation sites follow: Asn-53 and Asn-110. Residues 88–224 (SGSAKVAFSA…TFSGFLVFPL (137 aa)) enclose the C1q domain.

In terms of assembly, homohexamer; disulfide-linked homotrimers. The trimers are assembled via the globular C1q domains. The trimers associate via N-terminal cysteine residues to form disulfide-linked hexamers. May form homooligomers or heterooligomers with CBLN1 and CBLN3 prior to secretion. Once secreted, does not interact with other CBLN family members. Interacts with GRID2, and more weakly with GRID1. Interacts with NRXN1 and NRXN2 long and short isoforms produced by alternative promoter usage. Weakly interacts with NRXN3 short isoform and not at all with NRXN3 long isoform. Expressed in various brain regions with higher levels in the olfactory bulb, cerebral cortex, certain thalamic and hypothalamic nuclei, superior and inferior colliculi and some brainstem nuclei. Highly expressed in the dorsal medial habenula.

It localises to the secreted. Acts as a synaptic organizer in specific subsets of neurons in the brain. Essential for long-term maintenance but not establishment of excitatory synapses. Functions as part of a trans-synaptic complex by binding to postsynaptic GRID1 and presynaptic neurexins. This interaction helps regulate the activity of NMDA and AMPA receptors at hippocampal synapses without affecting synapse formation. NRXN1B-CBLN2-GRID1 complex transduce presynaptic signals into postsynaptic NMDAR response. NRXN3B-CBLN2-GRID1 complex transduce presynaptic signals into postsynaptic AMPAR response. The chain is Cerebellin-2 (Cbln2) from Mus musculus (Mouse).